We begin with the raw amino-acid sequence, 119 residues long: Beta-2-microglobulin (119 aa).

Residues 1 to 20 (MARFVVVPLLVLLSLFGLEA) form the signal peptide. The Ig-like C1-type domain maps to 25-114 (PKIQVYSRYP…VTFSTPKTVK (90 aa)). Residues C45 and C100 are joined by a disulfide bond.

It belongs to the beta-2-microglobulin family. As to quaternary structure, heterodimer of an alpha chain and a beta chain. Beta-2-microglobulin is the beta-chain of major histocompatibility complex class I molecules.

The protein resides in the secreted. In terms of biological role, component of the class I major histocompatibility complex (MHC). Involved in the presentation of peptide antigens to the immune system. In Saguinus bicolor bicolor (Pied bare-faced tamarin), this protein is Beta-2-microglobulin (B2M).